A 296-amino-acid polypeptide reads, in one-letter code: Polyamine aminopropyltransferase (296 aa).

Positions 5–238 (ELWYETLHAN…GIMTFAWATQ (234 aa)) constitute a PABS domain. Q33 contacts S-methyl-5'-thioadenosine. 2 residues coordinate spermidine: H64 and D88. Residues E108 and 140 to 141 (DG) each bind S-methyl-5'-thioadenosine. Residue D158 is the Proton acceptor of the active site. Residue 158-161 (DCTD) participates in spermidine binding. An S-methyl-5'-thioadenosine-binding site is contributed by P165.

This sequence belongs to the spermidine/spermine synthase family. As to quaternary structure, homodimer or homotetramer.

It localises to the cytoplasm. The enzyme catalyses S-adenosyl 3-(methylsulfanyl)propylamine + putrescine = S-methyl-5'-thioadenosine + spermidine + H(+). Its pathway is amine and polyamine biosynthesis; spermidine biosynthesis; spermidine from putrescine: step 1/1. Catalyzes the irreversible transfer of a propylamine group from the amino donor S-adenosylmethioninamine (decarboxy-AdoMet) to putrescine (1,4-diaminobutane) to yield spermidine. This is Polyamine aminopropyltransferase from Yersinia pseudotuberculosis serotype O:3 (strain YPIII).